We begin with the raw amino-acid sequence, 356 residues long: Alternative oxidase, mitochondrial (356 aa).

A helical transmembrane segment spans residues 152–172 (VIRFIFLETVAGVPGMVGGML). Fe cation-binding residues include E159, E198, and H201. Residues 217-237 (LMVLGAQGVFFNGFFISYLIS) form a helical membrane-spanning segment. Fe cation is bound by residues E249, E304, and H307. Positions 330–356 (YDNPEAPHPTKSAEIVKPTGWERDEVI) are disordered.

Belongs to the alternative oxidase family. Fe cation is required as a cofactor.

Its subcellular location is the mitochondrion inner membrane. Its function is as follows. Catalyzes cyanide-resistant oxygen consumption. May increase respiration when the cytochrome respiratory pathway is restricted, or in response to low temperatures. The polypeptide is Alternative oxidase, mitochondrial (AOX1) (Ajellomyces capsulatus (Darling's disease fungus)).